The primary structure comprises 865 residues: DNA topoisomerase 1 (865 aa).

Residues 3–142 form the Toprim domain; sequence KALVIVESPA…RYSRVVFNEI (140 aa). Glutamate 9 contributes to the Mg(2+) binding site. A disordered region spans residues 37–65; that stretch reads LPTSGSAAKKSADSTSTKTAKKPKKDERG. A compositionally biased stretch (low complexity) spans 39–54; it reads TSGSAAKKSADSTSTK. Aspartate 111 is a Mg(2+) binding site. The Topo IA-type catalytic domain occupies 158–575; the sequence is NIDRVNAQQA…HFFSDFTQQL (418 aa). The segment at 192–197 is interaction with DNA; the sequence is SAGRVQ. Tyrosine 319 acts as the O-(5'-phospho-DNA)-tyrosine intermediate in catalysis. 3 consecutive C4-type zinc fingers follow at residues 599-630, 662-689, and 711-736; these read CPTCGRKMGIRTASTGVFLGCSGYALPPKERC, CPKCGTAMDSYLIDPKRKLHVCGNNPTC, and CEKCGSEMHLKMGRFGKYMACTNEEC.

Belongs to the type IA topoisomerase family. As to quaternary structure, monomer. Requires Mn(2+) as cofactor. Ca(2+) is required as a cofactor.

It catalyses the reaction ATP-independent breakage of single-stranded DNA, followed by passage and rejoining.. Functionally, releases the supercoiling and torsional tension of DNA, which is introduced during the DNA replication and transcription, by transiently cleaving and rejoining one strand of the DNA duplex. Introduces a single-strand break via transesterification at a target site in duplex DNA. The scissile phosphodiester is attacked by the catalytic tyrosine of the enzyme, resulting in the formation of a DNA-(5'-phosphotyrosyl)-enzyme intermediate and the expulsion of a 3'-OH DNA strand. The free DNA strand then undergoes passage around the unbroken strand, thus removing DNA supercoils. Finally, in the religation step, the DNA 3'-OH attacks the covalent intermediate to expel the active-site tyrosine and restore the DNA phosphodiester backbone. This chain is DNA topoisomerase 1, found in Escherichia coli (strain K12).